A 164-amino-acid chain; its full sequence is uncharacterized protein (164 aa).

Residues 46 to 142 are disordered; that stretch reads GRSPEQKEHV…APDNSIYDTL (97 aa).

This is an uncharacterized protein from Caenorhabditis elegans.